Reading from the N-terminus, the 651-residue chain is Acetyl-coenzyme A synthetase (651 aa).

Residues 189–192, threonine 311, and asparagine 335 contribute to the CoA site; that span reads RGGK. Residues 387–389, 411–416, aspartate 500, and arginine 515 each bind ATP; these read GEP and DTWWQT. CoA is bound at residue serine 523. Residue arginine 526 participates in ATP binding. The Mg(2+) site is built by valine 537, histidine 539, and valine 542. A CoA-binding site is contributed by arginine 586. Lysine 611 bears the N6-acetyllysine mark.

Belongs to the ATP-dependent AMP-binding enzyme family. It depends on Mg(2+) as a cofactor. In terms of processing, acetylated. Deacetylation by the SIR2-homolog deacetylase activates the enzyme.

The enzyme catalyses acetate + ATP + CoA = acetyl-CoA + AMP + diphosphate. In terms of biological role, catalyzes the conversion of acetate into acetyl-CoA (AcCoA), an essential intermediate at the junction of anabolic and catabolic pathways. AcsA undergoes a two-step reaction. In the first half reaction, AcsA combines acetate with ATP to form acetyl-adenylate (AcAMP) intermediate. In the second half reaction, it can then transfer the acetyl group from AcAMP to the sulfhydryl group of CoA, forming the product AcCoA. The chain is Acetyl-coenzyme A synthetase from Brucella melitensis biotype 1 (strain ATCC 23456 / CCUG 17765 / NCTC 10094 / 16M).